We begin with the raw amino-acid sequence, 79 residues long: ATP synthase subunit c (79 aa).

Helical transmembrane passes span 7–27 and 56–76; these read VSGM…GAGI and IGSA…LFLI.

The protein belongs to the ATPase C chain family. F-type ATPases have 2 components, F(1) - the catalytic core - and F(0) - the membrane proton channel. F(1) has five subunits: alpha(3), beta(3), gamma(1), delta(1), epsilon(1). F(0) has three main subunits: a(1), b(2) and c(10-14). The alpha and beta chains form an alternating ring which encloses part of the gamma chain. F(1) is attached to F(0) by a central stalk formed by the gamma and epsilon chains, while a peripheral stalk is formed by the delta and b chains.

The protein localises to the cell membrane. In terms of biological role, f(1)F(0) ATP synthase produces ATP from ADP in the presence of a proton or sodium gradient. F-type ATPases consist of two structural domains, F(1) containing the extramembraneous catalytic core and F(0) containing the membrane proton channel, linked together by a central stalk and a peripheral stalk. During catalysis, ATP synthesis in the catalytic domain of F(1) is coupled via a rotary mechanism of the central stalk subunits to proton translocation. Key component of the F(0) channel; it plays a direct role in translocation across the membrane. A homomeric c-ring of between 10-14 subunits forms the central stalk rotor element with the F(1) delta and epsilon subunits. The chain is ATP synthase subunit c from Clostridium botulinum (strain Hall / ATCC 3502 / NCTC 13319 / Type A).